We begin with the raw amino-acid sequence, 225 residues long: Protein-L-isoaspartate O-methyltransferase (225 aa).

S75 is a catalytic residue.

The protein belongs to the methyltransferase superfamily. L-isoaspartyl/D-aspartyl protein methyltransferase family.

It is found in the cytoplasm. The enzyme catalyses [protein]-L-isoaspartate + S-adenosyl-L-methionine = [protein]-L-isoaspartate alpha-methyl ester + S-adenosyl-L-homocysteine. Its function is as follows. Catalyzes the methyl esterification of L-isoaspartyl residues in peptides and proteins that result from spontaneous decomposition of normal L-aspartyl and L-asparaginyl residues. It plays a role in the repair and/or degradation of damaged proteins. In Stenotrophomonas maltophilia (strain R551-3), this protein is Protein-L-isoaspartate O-methyltransferase.